Reading from the N-terminus, the 443-residue chain is Trigger factor (443 aa).

The PPIase FKBP-type domain occupies 164 to 249 (GDVLCVDFVG…AKSLKKAVDP (86 aa)).

It belongs to the FKBP-type PPIase family. Tig subfamily.

Its subcellular location is the cytoplasm. It carries out the reaction [protein]-peptidylproline (omega=180) = [protein]-peptidylproline (omega=0). In terms of biological role, involved in protein export. Acts as a chaperone by maintaining the newly synthesized protein in an open conformation. Functions as a peptidyl-prolyl cis-trans isomerase. The polypeptide is Trigger factor (Gluconobacter oxydans (strain 621H) (Gluconobacter suboxydans)).